A 675-amino-acid chain; its full sequence is Acyl-coenzyme A oxidase 3, peroxisomal (675 aa).

The transit peptide at 1 to 34 (MSDNRALRRAHVLANHILQSNPPSSNPSLSRELC) directs the protein to the peroxisome. 442-457 (AVGGQGVKTENLVGQL) is a binding site for FAD.

It belongs to the acyl-CoA oxidase family. Requires FAD as cofactor. In terms of tissue distribution, most abundant in flowers and senescing rosette leaves. Lower expression in hypocotyls, stems, young rosette leaves, cotyledons, cauline leaves and root tip of young seedlings.

It is found in the peroxisome. It carries out the reaction a 2,3-saturated acyl-CoA + O2 = a (2E)-enoyl-CoA + H2O2. It participates in lipid metabolism; peroxisomal fatty acid beta-oxidation. Functionally, catalyzes the desaturation of medium-chain acyl-CoAs to 2-trans-enoyl-CoAs. Active on C8:0- to C14:0-CoA with a maximal activity on C12:0-CoA. The protein is Acyl-coenzyme A oxidase 3, peroxisomal (ACX3) of Arabidopsis thaliana (Mouse-ear cress).